A 118-amino-acid polypeptide reads, in one-letter code: Ribonuclease P protein component (118 aa).

Belongs to the RnpA family. Consists of a catalytic RNA component (M1 or rnpB) and a protein subunit.

The enzyme catalyses Endonucleolytic cleavage of RNA, removing 5'-extranucleotides from tRNA precursor.. Functionally, RNaseP catalyzes the removal of the 5'-leader sequence from pre-tRNA to produce the mature 5'-terminus. It can also cleave other RNA substrates such as 4.5S RNA. The protein component plays an auxiliary but essential role in vivo by binding to the 5'-leader sequence and broadening the substrate specificity of the ribozyme. The protein is Ribonuclease P protein component of Shewanella denitrificans (strain OS217 / ATCC BAA-1090 / DSM 15013).